A 283-amino-acid chain; its full sequence is Non-selective voltage-gated ion channel VDAC3 (283 aa).

Cysteine 2 carries the N-acetylcysteine modification. At threonine 4 the chain carries Phosphothreonine. Lysine 12, lysine 15, and lysine 20 each carry N6-acetyllysine. Beta stranded transmembrane passes span 26–35 (MVKIDLKTKS) and 39–47 (VEFSTSGHA). Residue threonine 33 is modified to Phosphothreonine. Lysine 53 is covalently cross-linked (Glycyl lysine isopeptide (Lys-Gly) (interchain with G-Cter in ubiquitin)). Transmembrane regions (beta stranded) follow at residues 54–64 (ASGNLETKYKV), 69–76 (LIFTQKWN), and 80–89 (TLGTEISWEN). Residue lysine 90 is modified to N6-acetyllysine. A beta stranded membrane pass occupies residues 95-104 (LKLTVDTIFV). Residues lysine 109 and lysine 110 each participate in a glycyl lysine isopeptide (Lys-Gly) (interchain with G-Cter in ubiquitin) cross-link. 10 beta stranded membrane-spanning segments follow: residues 111–120 (SGKLKASYRR), 123–130 (FSVGSKVD), 137–145 (TIYGWAVLA), 150–158 (LAGYQMSFD), 163–175 (KLCQ…GYKA), 178–185 (FQLHTHVN), 189–198 (EFGGSIYQRV), 202–211 (IETSINLAWT), 218–227 (RFGIAAKYRL), and 231–238 (TSLSAKVN). Phosphoserine is present on serine 241. Residues 242-244 (LIG) and 260-264 (SALVD) contribute to the NAD(+) site. Beta stranded transmembrane passes span 242–251 (LIGLGYTQSL) and 254–263 (GVKLTLSALV). Residue lysine 266 is modified to N6-acetyllysine; alternate. Lysine 266 participates in a covalent cross-link: Glycyl lysine isopeptide (Lys-Gly) (interchain with G-Cter in ubiquitin); alternate. The beta stranded transmembrane segment at 273 to 282 (HKVGLGFELE) threads the bilayer.

It belongs to the eukaryotic mitochondrial porin family. Interacts with ARMC12 in a TBC1D21-dependent manner. Interacts with MISFA. Post-translationally, ubiquitinated by PRKN during mitophagy, leading to its degradation and enhancement of mitophagy. Deubiquitinated by USP30. In terms of tissue distribution, isoform 1 is widely expressed with strong expression in atrium and ascitic tumor, lower levels in brain and very low levels in liver and kidney. Isoform 2 is also widely expressed with highest levels in brain but no expression in kidney. Also expressed in flagella of epididymal sperm.

The protein resides in the mitochondrion outer membrane. It localises to the membrane. It carries out the reaction chloride(in) = chloride(out). The catalysed reaction is K(+)(in) = K(+)(out). Non-selective voltage-gated ion channel that mediates the transport of anions and cations through the mitochondrion outer membrane and plasma membrane. Forms a high-conducting channel with a stable open state and a voltage-induced closure with a mild preference for anions over cations. Involved in male fertility and sperm mitochondrial sheath formation. This chain is Non-selective voltage-gated ion channel VDAC3, found in Rattus norvegicus (Rat).